We begin with the raw amino-acid sequence, 359 residues long: DNA replication and repair protein RecF (359 aa).

G30 to T37 serves as a coordination point for ATP.

The protein belongs to the RecF family.

Its subcellular location is the cytoplasm. Functionally, the RecF protein is involved in DNA metabolism; it is required for DNA replication and normal SOS inducibility. RecF binds preferentially to single-stranded, linear DNA. It also seems to bind ATP. The polypeptide is DNA replication and repair protein RecF (Haemophilus influenzae (strain 86-028NP)).